The primary structure comprises 133 residues: Interleukin-4 (133 aa).

The signal sequence occupies residues methionine 1–glycine 24. 3 disulfide bridges follow: cysteine 27/cysteine 133, cysteine 48/cysteine 85, and cysteine 70/cysteine 105. An N-linked (GlcNAc...) asparagine glycan is attached at asparagine 62.

Belongs to the IL-4/IL-13 family.

It localises to the secreted. In terms of biological role, participates in at least several B-cell activation processes as well as of other cell types. It is a costimulator of DNA-synthesis. It induces the expression of class II MHC molecules on resting B-cells. It enhances both secretion and cell surface expression of IgE and IgG1. It also regulates the expression of the low affinity Fc receptor for IgE (CD23) on both lymphocytes and monocytes. Positively regulates IL31RA expression in macrophages. Stimulates autophagy in dendritic cells by interfering with mTORC1 signaling and through the induction of RUFY4. The chain is Interleukin-4 (IL4) from Sus scrofa (Pig).